Consider the following 727-residue polypeptide: NADH-ubiquinone oxidoreductase 75 kDa subunit, mitochondrial (727 aa).

The transit peptide at 1–23 (MLRIPVRKALVGLSKSPKGCVRT) directs the protein to the mitochondrion. Positions 30–108 (NLIEVFVDGQ…GWNILTNSEK (79 aa)) constitute a 2Fe-2S ferredoxin-type domain. [2Fe-2S] cluster-binding residues include Cys64, Cys75, and Cys78. Lys84 bears the N6-acetyllysine mark. A [2Fe-2S] cluster-binding site is contributed by Cys92. Positions 108 to 147 (KSKKAREGVMEFLLANHPLDCPICDQGGECDLQDQSMMFG) constitute a 4Fe-4S His(Cys)3-ligated-type domain. Residues His124, Cys128, Cys131, Cys137, Cys176, Cys179, Cys182, and Cys226 each contribute to the [4Fe-4S] cluster site. Residues 245–301 (TRKTESIDVMDAVGSNIVVSTRTGEVMRILPRMHEDINEXWISDKTRFAYDGLKRQR) form the 4Fe-4S Mo/W bis-MGD-type domain. 3 positions are modified to N6-acetyllysine: Lys467, Lys499, and Lys709.

Belongs to the complex I 75 kDa subunit family. In terms of assembly, core subunit of respiratory chain NADH dehydrogenase (Complex I) which is composed of 45 different subunits. This is the largest subunit of complex I and it is a component of the iron-sulfur (IP) fragment of the enzyme. Complex I associates with ubiquinol-cytochrome reductase complex (Complex III) to form supercomplexes. Interacts with MDM2 and AKAP1. Requires [2Fe-2S] cluster as cofactor. It depends on [4Fe-4S] cluster as a cofactor.

The protein resides in the mitochondrion inner membrane. The enzyme catalyses a ubiquinone + NADH + 5 H(+)(in) = a ubiquinol + NAD(+) + 4 H(+)(out). Its function is as follows. Core subunit of the mitochondrial membrane respiratory chain NADH dehydrogenase (Complex I) which catalyzes electron transfer from NADH through the respiratory chain, using ubiquinone as an electron acceptor. Essential for catalysing the entry and efficient transfer of electrons within complex I. Plays a key role in the assembly and stability of complex I and participates in the association of complex I with ubiquinol-cytochrome reductase complex (Complex III) to form supercomplexes. In Gorilla gorilla gorilla (Western lowland gorilla), this protein is NADH-ubiquinone oxidoreductase 75 kDa subunit, mitochondrial (NDUFS1).